The sequence spans 93 residues: Small ribosomal subunit protein uS17 (93 aa).

This sequence belongs to the universal ribosomal protein uS17 family. As to quaternary structure, part of the 30S ribosomal subunit.

In terms of biological role, one of the primary rRNA binding proteins, it binds specifically to the 5'-end of 16S ribosomal RNA. This is Small ribosomal subunit protein uS17 from Bordetella bronchiseptica (strain ATCC BAA-588 / NCTC 13252 / RB50) (Alcaligenes bronchisepticus).